The chain runs to 167 residues: Multifunctional Ser/Thr-tRNA deacylase ProXp-y (167 aa).

It is found in the cytoplasm. The catalysed reaction is L-seryl-tRNA(Lys) + H2O = tRNA(Lys) + L-serine. The enzyme catalyses L-threonyl-tRNA(Lys) + H2O = tRNA(Lys) + L-threonine. It catalyses the reaction L-homoseryl-tRNA(Lys) + H2O = tRNA(Lys) + L-homoserine + H(+). It carries out the reaction L-seryl-tRNA(Ala) + H2O = tRNA(Ala) + L-serine. The catalysed reaction is L-homoseryl-tRNA(Ser) + H2O = tRNA(Ser) + L-homoserine + H(+). The enzyme catalyses L-seryl-tRNA(Thr) + H2O = tRNA(Thr) + L-serine. It catalyses the reaction L-threonyl-tRNA(Ile) + H2O = tRNA(Ile) + L-threonine. It carries out the reaction L-threonyl-tRNA(Val) + H2O = tRNA(Val) + L-threonine. The catalysed reaction is L-threonyl-tRNA(Ser) + H2O = tRNA(Ser) + L-threonine. In terms of biological role, an aminoacyl-tRNA editing enzyme that deacylates Ser-tRNA and/or Thr-tRNA mischarged by lysyl-tRNA synthetase (LysRS), threonyl-tRNA synthetase (ThrRS), seryl-tRNA synthetase (SerRS), alanyl-tRNA synthetase (AlaRS), valyl-tRNA synthetase (ValRS) and isoleucyl-tRNA synthetase (IleRS) in vitro. Also deacylates mischarged Hse-tRNA(Lys) and Hse-tRNA(Ser), and cognate Ser-tRNA(Ser) and Thr-tRNA(Thr) in vitro. The presence of cognate ThrRS abolishes the Thr-tRNA(Thr) deacylase activity, hence this activity is not applicable physiologically. Not able to remove the amino acid moiety from cognate Val-tRNA(Val), Ile-tRNA(Ile), Lys-tRNA(Lys), Ala-tRNA(Ala) or Pro-tRNA(Pro), or from incorrectly charged Ala-tRNA(Pro), Cys-tRNA(Pro) or Leu-tRNA(Pro) in vitro. May be required in vivo to prevent mistranslation and to maintain growth when the error prone stress-inducible lysyl-tRNA synthetase (LysU) is expressed under environmental pressure. The sequence is that of Multifunctional Ser/Thr-tRNA deacylase ProXp-y from Escherichia coli O157:H7.